The sequence spans 335 residues: Interleukin-12 subunit beta (335 aa).

Positions 1–22 (MCPQKLTISWFAIVLLVSPLMA) are cleaved as a signal peptide. Residues 23–106 (MWELEKDVYV…LSHSHLLLHK (84 aa)) form the Ig-like C2-type domain. The N-linked (GlcNAc...) asparagine glycan is linked to asparagine 47. Cysteine 50 and cysteine 90 form a disulfide bridge. N-linked (GlcNAc...) asparagine glycosylation is found at asparagine 122, asparagine 132, and asparagine 220. One can recognise a Fibronectin type-III domain in the interval 233 to 324 (PDPPKNLQMK…QDRYYNSSCS (92 aa)).

This sequence belongs to the IL-12B family. As to quaternary structure, heterodimer with IL12A; disulfide-linked. The heterodimer is known as interleukin IL-12. Heterodimer with IL23A; disulfide-linked. The heterodimer is known as interleukin IL-23. Also secreted as a monomer. Interacts with NBR1; this interaction promotes IL-12 secretion.

The protein resides in the secreted. In terms of biological role, cytokine that can act as a growth factor for activated T and NK cells, enhance the lytic activity of NK/lymphokine-activated killer cells, and stimulate the production of IFN-gamma by resting PBMC. Functionally, associates with IL23A to form the IL-23 interleukin, a heterodimeric cytokine which functions in innate and adaptive immunity. IL-23 may constitute with IL-17 an acute response to infection in peripheral tissues. IL-23 binds to a heterodimeric receptor complex composed of IL12RB1 and IL23R, activates the Jak-Stat signaling cascade, stimulates memory rather than naive T-cells and promotes production of pro-inflammatory cytokines. IL-23 induces autoimmune inflammation and thus may be responsible for autoimmune inflammatory diseases and may be important for tumorigenesis. The polypeptide is Interleukin-12 subunit beta (Il12b) (Mus musculus (Mouse)).